The sequence spans 400 residues: MNKKTIRDVDWAGKRALVRVDFNVPLDEQGQITDDTRIRAALPTIRYLLEHGAKVILMSHLGRPKGKPNPKYSLRPVVERLFELLPEATEVKKTEAITGPAAEAAVSMLKPGQVLVLENTRFDPREEANDPQMAAELAKLGDVFVNDAFGTAHRANASTEGVAHYLPAVAGFLMEKELTYIGGALSNPQRPFVTVIGGAKISDKIGVIENLLGKVDALLIGGGMANTFLLAKGLNLGDSLVEPESVPVAQQLMAKAEERGARLLLPVDVVIADAFSAEAQRQVVEVTAIPSGWRVLDIGPKTIELYSAEIRSARTVIWNGPMGVFELEPFAAGTRAIAQAMAEASANGAITIVGGGDSVAAVEQAGLAEKMAHVSTGGGASLELLEGRVLPGVAALQDAE.

Residues 21-23 (DFN), arginine 37, 60-63 (HLGR), arginine 121, and arginine 154 each bind substrate. Residues lysine 204, glutamate 326, and 355 to 358 (GGDS) each bind ATP.

Belongs to the phosphoglycerate kinase family. As to quaternary structure, monomer.

It is found in the cytoplasm. The enzyme catalyses (2R)-3-phosphoglycerate + ATP = (2R)-3-phospho-glyceroyl phosphate + ADP. It participates in carbohydrate degradation; glycolysis; pyruvate from D-glyceraldehyde 3-phosphate: step 2/5. In Chloroflexus aggregans (strain MD-66 / DSM 9485), this protein is Phosphoglycerate kinase.